The chain runs to 637 residues: 1-deoxy-D-xylulose-5-phosphate synthase (637 aa).

Thiamine diphosphate-binding positions include histidine 74 and 115-117 (GHS). Aspartate 146 serves as a coordination point for Mg(2+). Thiamine diphosphate contacts are provided by residues 147 to 148 (GA), asparagine 175, tyrosine 285, and glutamate 366. Asparagine 175 contacts Mg(2+).

The protein belongs to the transketolase family. DXPS subfamily. Homodimer. Mg(2+) is required as a cofactor. It depends on thiamine diphosphate as a cofactor.

The enzyme catalyses D-glyceraldehyde 3-phosphate + pyruvate + H(+) = 1-deoxy-D-xylulose 5-phosphate + CO2. It functions in the pathway metabolic intermediate biosynthesis; 1-deoxy-D-xylulose 5-phosphate biosynthesis; 1-deoxy-D-xylulose 5-phosphate from D-glyceraldehyde 3-phosphate and pyruvate: step 1/1. Its function is as follows. Catalyzes the acyloin condensation reaction between C atoms 2 and 3 of pyruvate and glyceraldehyde 3-phosphate to yield 1-deoxy-D-xylulose-5-phosphate (DXP). The sequence is that of 1-deoxy-D-xylulose-5-phosphate synthase from Pelotomaculum thermopropionicum (strain DSM 13744 / JCM 10971 / SI).